Here is a 293-residue protein sequence, read N- to C-terminus: Protease HtpX (293 aa).

2 helical membrane passes run 4-24 and 34-54; these read IALF…VLSL and GLMI…LLMS. Residue His-139 participates in Zn(2+) binding. Glu-140 is an active-site residue. His-143 is a binding site for Zn(2+). Transmembrane regions (helical) follow at residues 158–178 and 193–213; these read IVNT…SGFL and LVYF…ASII. Glu-222 is a binding site for Zn(2+).

Belongs to the peptidase M48B family. Zn(2+) is required as a cofactor.

It is found in the cell inner membrane. The chain is Protease HtpX from Pectobacterium carotovorum subsp. carotovorum (strain PC1).